Reading from the N-terminus, the 2295-residue chain is Protein DOP1B (2295 aa).

2 positions are modified to phosphoserine: Ser-556 and Ser-597. 4 disordered regions span residues 574–599, 651–684, 1034–1059, and 1092–1136; these read AGDE…SSPE, GEEN…DPKP, CKEA…QFTT, and DLPD…LQDL. The span at 1111-1131 shows a compositional bias: polar residues; the sequence is ADTSSGHTDSENTSTFSSPSH. Residue Ser-1167 is modified to Phosphoserine.

This sequence belongs to the DOP1 family. In terms of assembly, homooligomer. Heterotrimer with ATP9A and MON2; this interaction is retromer-independent. Interacts with SNX3. In terms of tissue distribution, expressed in liver, heart and brain.

It localises to the early endosome membrane. The protein resides in the golgi apparatus membrane. May play a role in regulating membrane trafficking of cargo proteins. Together with ATP9A and MON2, regulates SNX3 retromer-mediated endosomal sorting of WLS away from lysosomal degradation. The chain is Protein DOP1B (Dop1b) from Mus musculus (Mouse).